The following is a 531-amino-acid chain: Transactivator/viroplasmin protein (531 aa).

Disordered regions lie at residues 80-101 (ASGK…TATG) and 505-531 (CKSE…SVLV). Composition is skewed to polar residues over residues 91 to 100 (SATSPEQTAT) and 505 to 517 (CKSE…TSEE). The segment covering 518–531 (GLQESEDEDFSVLV) has biased composition (acidic residues).

The protein belongs to the caulimoviridae viroplasmin family.

It localises to the host cytoplasm. Enhances the translation of downstream ORFs on polycistronic mRNAs. The chain is Transactivator/viroplasmin protein from Cestrum yellow leaf curling virus (CmYLCV).